Consider the following 102-residue polypeptide: Small ribosomal subunit protein uS10 (102 aa).

Belongs to the universal ribosomal protein uS10 family. As to quaternary structure, part of the 30S ribosomal subunit.

Involved in the binding of tRNA to the ribosomes. The protein is Small ribosomal subunit protein uS10 of Saccharolobus islandicus (strain M.16.4 / Kamchatka #3) (Sulfolobus islandicus).